The following is a 357-amino-acid chain: Major outer membrane protein P.IB (357 aa).

The signal sequence occupies residues 1–19 (MKKSLIALTLAALPVAAMA).

It belongs to the Gram-negative porin family. In terms of assembly, homotrimer.

It localises to the cell outer membrane. In terms of biological role, serves as a slightly cation selective porin. In Neisseria sicca, this protein is Major outer membrane protein P.IB (por).